A 414-amino-acid chain; its full sequence is Dothistromin biosynthesis peroxidase dotB (414 aa).

The signal sequence occupies residues 1–18 (MHFFSAIVLTCLASTAVA). Residue Cys-72 coordinates heme. N-linked (GlcNAc...) asparagine glycosylation is found at Asn-187, Asn-241, and Asn-328.

It belongs to the chloroperoxidase family. Heme b is required as a cofactor.

The protein operates within mycotoxin biosynthesis. In terms of biological role, peroxidase; part of the fragmented gene cluster that mediates the biosynthesis of dothistromin (DOTH), a polyketide toxin very similar in structure to the aflatoxin precursor, versicolorin B. The first step of the pathway is the conversion of acetate to norsolorinic acid (NOR) and requires the fatty acid synthase subunits hexA and hexB, as well as the polyketide synthase pksA. PksA combines a hexanoyl starter unit and 7 malonyl-CoA extender units to synthesize the precursor NOR. The hexanoyl starter unit is provided to the acyl-carrier protein (ACP) domain by the fungal fatty acid synthase hexA/hexB. The second step is the conversion of NOR to averantin (AVN) and requires the norsolorinic acid ketoreductase nor1, which catalyzes the dehydration of norsolorinic acid to form (1'S)-averantin. The cytochrome P450 monooxygenase avnA then catalyzes the hydroxylation of AVN to 5'hydroxyaverantin (HAVN). The next step is performed by adhA that transforms HAVN to averufin (AVF). Averufin might then be converted to hydroxyversicolorone by cypX and avfA. Hydroxyversicolorone is further converted versiconal hemiacetal acetate (VHA) by moxY. VHA is then the substrate for the versiconal hemiacetal acetate esterase est1 to yield versiconal (VAL). Versicolorin B synthase vbsA then converts VAL to versicolorin B (VERB) by closing the bisfuran ring. Then, the activity of the versicolorin B desaturase verB leads to versicolorin A (VERA). DotB, a predicted chloroperoxidase, may perform epoxidation of the A-ring of VERA. Alternatively, a cytochrome P450, such as cypX or avnA could catalyze this step. It is also possible that another, uncharacterized, cytochrome P450 enzyme is responsible for this step. Opening of the epoxide could potentially be achieved by the epoxide hydrolase epoA. However, epoA seems not to be required for DOTH biosynthesis, but other epoxide hydrolases may have the ability to complement this hydrolysis. Alternatively, opening of the epoxide ring could be achieved non-enzymatically. The next step is the deoxygenation of ring A to yield the 5,8-dihydroxyanthraquinone which is most likely catalyzed by the NADPH dehydrogenase encoded by ver1. The last stages of DOTH biosynthesis are proposed to involve hydroxylation of the bisfuran. OrdB and norB might have oxidative roles here. An alternative possibility is that cytochrome P450 monoogenases such as avnA and cypX might perform these steps in addition to previously proposed steps. The protein is Dothistromin biosynthesis peroxidase dotB of Dothistroma septosporum (Red band needle blight fungus).